The following is a 78-amino-acid chain: Metallothionein-like protein type 2 (78 aa).

The protein belongs to the metallothionein superfamily. Type 15 family.

In terms of biological role, metallothioneins have a high content of cysteine residues that bind various heavy metals. This is Metallothionein-like protein type 2 from Nicotiana glutinosa (Tobacco).